Consider the following 384-residue polypeptide: Ceramide very long chain fatty acid hydroxylase SCS7 (384 aa).

The Cytoplasmic segment spans residues 1 to 197 (MSTNTSKTLE…NFLEPLTKTA (197 aa)). Residues 9–90 (LELFSKKTVQ…EDEYLIGYLA (82 aa)) enclose the Cytochrome b5 heme-binding domain. His45 and His72 together coordinate heme. A helical membrane pass occupies residues 198-216 (WWVVPVAWLPVVVYHMGVA). The Lumenal portion of the chain corresponds to 217 to 221 (LKNMN). Residues 222-246 (QLFACFLFCVGVFVWTLIEYGLHRF) traverse the membrane as a helical segment. Zn(2+)-binding residues include His244, His249, His268, His271, and His272. The Cytoplasmic portion of the chain corresponds to 247 to 284 (LFHFDDWLPESNIAFATHFLLHGCHHYLPMDKYRLVMP). Residues 285-302 (PTLFVILCAPFYKLVFAL) form a helical membrane-spanning segment. At 303–304 (LP) the chain is on the lumenal side. The helical transmembrane segment at 305–328 (LYWAYAGFAGGLFGYVCYDECHFF) threads the bilayer. Residues His326, His330, His345, His348, and His349 each coordinate Zn(2+). The Cytoplasmic segment spans residues 329–384 (LHHSKLPPFMRKLKKYHLEHHYKNYQLGFGVTSWFWDEVFGTYLGPDAPLSKMKYE).

The protein belongs to the sterol desaturase family. SCS7 subfamily. Requires Zn(2+) as cofactor.

Its subcellular location is the endoplasmic reticulum membrane. The enzyme catalyses an N-(1,2 saturated acyl)-(4R)-hydroxysphinganine + 2 Fe(II)-[cytochrome b5] + O2 + 2 H(+) = an N-(2R-hydroxyacyl)-4R-hydroxysphinganine + 2 Fe(III)-[cytochrome b5] + H2O. The catalysed reaction is an N-(1,2-saturated acyl)sphinganine + 2 Fe(II)-[cytochrome b5] + O2 + 2 H(+) = an N-[(2'R)-hydroxyacyl]sphinganine + 2 Fe(III)-[cytochrome b5] + H2O. It carries out the reaction N-hexacosanoyl-(4R)-hydroxysphinganine + 2 Fe(II)-[cytochrome b5] + O2 + 2 H(+) = N-(2-hydroxyhexacosanyl)-(4R)-hydroxysphinganine + 2 Fe(III)-[cytochrome b5] + H2O. The protein operates within sphingolipid metabolism. Functionally, ceramide hydroxylase involved in the hydroxylation of sphingolipid-associated very long chain fatty acids. Postulated to hydroxylate the very long chain fatty acid of dihydroceramides and phytoceramides at C-2. The protein is Ceramide very long chain fatty acid hydroxylase SCS7 of Saccharomyces cerevisiae (strain ATCC 204508 / S288c) (Baker's yeast).